The primary structure comprises 36 residues: Photosystem I reaction center subunit VIII (36 aa).

Residues 9 to 29 (ILVPLVGLIFPAIAMTSLFIY) traverse the membrane as a helical segment.

The protein belongs to the PsaI family.

Its subcellular location is the plastid. The protein resides in the chloroplast thylakoid membrane. May help in the organization of the PsaL subunit. This is Photosystem I reaction center subunit VIII from Tupiella akineta (Green alga).